A 406-amino-acid chain; its full sequence is MKELLRKWNNISLVKRILMGLIIGIMLALWIPDIAAPVAILGNLFVGALKAVAPVLVLILVMGAIANHKSGQQTNMKSILILYLLGTFLAGVTAVIASFMFPVSIALAAGAEDITAPGGITEVLLSLLMNVVDNPVKALMNANYIGILSWAILLGLALRTAGESTKQLIGDFADAVSKVVKWVINLAPLGILGLVFDSIATSGLEVLLGYGKLLLLLVGCMVFVALIINPLIVYLKIRKNPYPLVFRCLRESGITAFFTRSSAANIPVNLTLCEKLGLDRNTYSISIPLGATINMAGAAVTIAVLTLAAVHTLGITVDIPTAIILSVLSAIAACGASGVAGGSLLLIPLACSLFGISNDIAMQVVGVGFIIGVVQDSCETALNSSTDVLFTAAAEYGEWRKEGKAF.

9 helical membrane passes run 21 to 41 (LIIG…VAIL), 45 to 65 (FVGA…MGAI), 79 to 99 (ILIL…IASF), 138 to 158 (ALMN…GLAL), 179 to 199 (VVKW…FDSI), 213 to 233 (LLLL…PLIV), 285 to 305 (ISIP…IAVL), 313 to 333 (LGIT…AIAA), and 360 to 380 (IAMQ…SCET).

It belongs to the dicarboxylate/amino acid:cation symporter (DAACS) (TC 2.A.23) family.

The protein localises to the cell membrane. It carries out the reaction L-serine(in) + Na(+)(in) = L-serine(out) + Na(+)(out). It catalyses the reaction L-threonine(in) + Na(+)(in) = L-threonine(out) + Na(+)(out). In terms of biological role, involved in the import of serine and threonine into the cell, with the concomitant import of sodium (symport system). This Desulfitobacterium hafniense (strain Y51) protein is Serine/threonine transporter SstT.